We begin with the raw amino-acid sequence, 349 residues long: Phospho-N-acetylmuramoyl-pentapeptide-transferase (349 aa).

10 consecutive transmembrane segments (helical) span residues 13 to 33 (LFFSLALTGMTTLVLTVSLGV), 69 to 89 (GGGVLLFISLIASLLVWLPWG), 91 to 111 (FSTWFFIILLTCYAGLGWYDD), 129 to 149 (FMVQIAIAAFTLIALPYIYGS), 165 to 185 (LSLPFWLGKVFCLGLALVAII), 197 to 217 (LDGLAAGTMSFAALGFIFVAL), 228 to 248 (VAYVLAALVGACIGFLWYNGF), 252 to 272 (LFMGDTGSLLLGGLLGSCAVM), 278 to 298 (ILVVIGGVFVAEAGSVILQVL), and 327 to 347 (IVMRFWIFSFVCAGLGIAAVL).

It belongs to the glycosyltransferase 4 family. MraY subfamily. It depends on Mg(2+) as a cofactor.

Its subcellular location is the cell inner membrane. It carries out the reaction UDP-N-acetyl-alpha-D-muramoyl-L-alanyl-gamma-D-glutamyl-meso-2,6-diaminopimeloyl-D-alanyl-D-alanine + di-trans,octa-cis-undecaprenyl phosphate = di-trans,octa-cis-undecaprenyl diphospho-N-acetyl-alpha-D-muramoyl-L-alanyl-D-glutamyl-meso-2,6-diaminopimeloyl-D-alanyl-D-alanine + UMP. Its pathway is cell wall biogenesis; peptidoglycan biosynthesis. Catalyzes the initial step of the lipid cycle reactions in the biosynthesis of the cell wall peptidoglycan: transfers peptidoglycan precursor phospho-MurNAc-pentapeptide from UDP-MurNAc-pentapeptide onto the lipid carrier undecaprenyl phosphate, yielding undecaprenyl-pyrophosphoryl-MurNAc-pentapeptide, known as lipid I. The polypeptide is Phospho-N-acetylmuramoyl-pentapeptide-transferase (Chlamydia pneumoniae (Chlamydophila pneumoniae)).